Here is a 123-residue protein sequence, read N- to C-terminus: Large ribosomal subunit protein uL14 (123 aa).

The protein belongs to the universal ribosomal protein uL14 family. As to quaternary structure, part of the 50S ribosomal subunit. Forms a cluster with proteins L3 and L19. In the 70S ribosome, L14 and L19 interact and together make contacts with the 16S rRNA in bridges B5 and B8.

Functionally, binds to 23S rRNA. Forms part of two intersubunit bridges in the 70S ribosome. The protein is Large ribosomal subunit protein uL14 of Blochmanniella pennsylvanica (strain BPEN).